We begin with the raw amino-acid sequence, 267 residues long: tRNA pseudouridine synthase A (267 aa).

Asp54 functions as the Nucleophile in the catalytic mechanism. Tyr114 serves as a coordination point for substrate.

It belongs to the tRNA pseudouridine synthase TruA family. As to quaternary structure, homodimer.

The catalysed reaction is uridine(38/39/40) in tRNA = pseudouridine(38/39/40) in tRNA. Its function is as follows. Formation of pseudouridine at positions 38, 39 and 40 in the anticodon stem and loop of transfer RNAs. In Tropheryma whipplei (strain Twist) (Whipple's bacillus), this protein is tRNA pseudouridine synthase A.